The sequence spans 298 residues: N-acetylmuramic acid 6-phosphate etherase 2 (298 aa).

An SIS domain is found at 51–214 (IVSRFEQGGR…STAAMVRLGR (164 aa)). Residue Glu-79 is the Proton donor of the active site. Glu-110 is an active-site residue.

Belongs to the GCKR-like family. MurNAc-6-P etherase subfamily. In terms of assembly, homodimer.

It carries out the reaction N-acetyl-D-muramate 6-phosphate + H2O = N-acetyl-D-glucosamine 6-phosphate + (R)-lactate. Its pathway is amino-sugar metabolism; N-acetylmuramate degradation. In terms of biological role, specifically catalyzes the cleavage of the D-lactyl ether substituent of MurNAc 6-phosphate, producing GlcNAc 6-phosphate and D-lactate. The sequence is that of N-acetylmuramic acid 6-phosphate etherase 2 from Bacillus licheniformis (strain ATCC 14580 / DSM 13 / JCM 2505 / CCUG 7422 / NBRC 12200 / NCIMB 9375 / NCTC 10341 / NRRL NRS-1264 / Gibson 46).